We begin with the raw amino-acid sequence, 245 residues long: 1-(5-phosphoribosyl)-5-[(5-phosphoribosylamino)methylideneamino] imidazole-4-carboxamide isomerase (245 aa).

Residue aspartate 7 is the Proton acceptor of the active site. Residue aspartate 129 is the Proton donor of the active site.

The protein belongs to the HisA/HisF family.

It is found in the cytoplasm. The enzyme catalyses 1-(5-phospho-beta-D-ribosyl)-5-[(5-phospho-beta-D-ribosylamino)methylideneamino]imidazole-4-carboxamide = 5-[(5-phospho-1-deoxy-D-ribulos-1-ylimino)methylamino]-1-(5-phospho-beta-D-ribosyl)imidazole-4-carboxamide. Its pathway is amino-acid biosynthesis; L-histidine biosynthesis; L-histidine from 5-phospho-alpha-D-ribose 1-diphosphate: step 4/9. This Vibrio vulnificus (strain CMCP6) protein is 1-(5-phosphoribosyl)-5-[(5-phosphoribosylamino)methylideneamino] imidazole-4-carboxamide isomerase.